Reading from the N-terminus, the 324-residue chain is THUMP domain-containing protein 1 homolog (324 aa).

Disordered regions lie at residues 1 to 24 (MEPA…KKYF) and 67 to 104 (SEKP…DDDD). The span at 68-80 (EKPENEPEKKQPE) shows a compositional bias: basic and acidic residues. The residue at position 99 (threonine 99) is a Phosphothreonine. Serine 100 carries the post-translational modification Phosphoserine. Residues 154-260 (DIATTGKSMS…RGWCLLSVID (107 aa)) enclose the THUMP domain. The segment at 275–324 (NPSDKKSSGEGDSKSETSEVANGNDKEQAESSEESKSNDDENKDSTENDK) is disordered. 2 stretches are compositionally biased toward basic and acidic residues: residues 277–291 (SDKK…KSET) and 298–324 (NDKE…ENDK).

This sequence belongs to the THUMPD1 family.

In Drosophila melanogaster (Fruit fly), this protein is THUMP domain-containing protein 1 homolog.